The chain runs to 331 residues: ATPase GET3 (331 aa).

32-39 (KGGVGKTT) contributes to the ATP binding site. The active site involves aspartate 61. ATP-binding residues include glutamate 235 and asparagine 262. Positions 273 and 276 each coordinate Zn(2+).

Belongs to the arsA ATPase family. Homodimer.

It is found in the cytoplasm. It localises to the endoplasmic reticulum. Its function is as follows. ATPase required for the post-translational delivery of tail-anchored (TA) proteins to the endoplasmic reticulum. Recognizes and selectively binds the transmembrane domain of TA proteins in the cytosol. This complex then targets to the endoplasmic reticulum by membrane-bound receptors, where the tail-anchored protein is released for insertion. This process is regulated by ATP binding and hydrolysis. ATP binding drives the homodimer towards the closed dimer state, facilitating recognition of newly synthesized TA membrane proteins. ATP hydrolysis is required for insertion. Subsequently, the homodimer reverts towards the open dimer state, lowering its affinity for the membrane-bound receptor, and returning it to the cytosol to initiate a new round of targeting. The polypeptide is ATPase GET3 (Malassezia globosa (strain ATCC MYA-4612 / CBS 7966) (Dandruff-associated fungus)).